The sequence spans 391 residues: Polyketide synthase 1 (391 aa).

The active site involves Cys-164.

Belongs to the thiolase-like superfamily. Chalcone/stilbene synthases family. Homodimer. Expressed in fruits.

The enzyme catalyses (E)-4-coumaroyl-CoA + 3 malonyl-CoA + 3 H(+) = 2',4,4',6'-tetrahydroxychalcone + 3 CO2 + 4 CoA. Its pathway is secondary metabolite biosynthesis; flavonoid biosynthesis. Functionally, polyketide synthase producing naringenin chalcone and slightly p-coumaryltriacetic acid lactone (CTAL). Can use p-coumaryl-CoA as substrate. This Rubus idaeus (Raspberry) protein is Polyketide synthase 1 (PKS1).